Here is a 180-residue protein sequence, read N- to C-terminus: tRNA (cytidine(56)-2'-O)-methyltransferase (180 aa).

S-adenosyl-L-methionine is bound by residues Leu84 and 112–116 (GAEKV).

The protein belongs to the aTrm56 family. Homodimer.

It is found in the cytoplasm. The catalysed reaction is cytidine(56) in tRNA + S-adenosyl-L-methionine = 2'-O-methylcytidine(56) in tRNA + S-adenosyl-L-homocysteine + H(+). Functionally, specifically catalyzes the AdoMet-dependent 2'-O-ribose methylation of cytidine at position 56 in tRNAs. In Natronomonas pharaonis (strain ATCC 35678 / DSM 2160 / CIP 103997 / JCM 8858 / NBRC 14720 / NCIMB 2260 / Gabara) (Halobacterium pharaonis), this protein is tRNA (cytidine(56)-2'-O)-methyltransferase.